A 174-amino-acid polypeptide reads, in one-letter code: uncharacterized protein (174 aa).

Residues 1-55 are disordered; it reads MGCVVSKSDDIKNENESRQRNQASSSQQPSSSQTPSKQIGIAAKDSEEQPQEVSY. A lipid anchor (N-myristoyl glycine) is attached at Gly2. The segment covering 7 to 19 has biased composition (basic and acidic residues); that stretch reads KSDDIKNENESRQ. A compositionally biased stretch (low complexity) spans 20-38; the sequence is RNQASSSQQPSSSQTPSKQ.

This is an uncharacterized protein from Dictyostelium discoideum (Social amoeba).